We begin with the raw amino-acid sequence, 415 residues long: Multidrug resistance protein MdtA (415 aa).

The first 21 residues, 1 to 21 (MKGSYKSRWVIVIVVVIAAIA), serve as a signal peptide directing secretion. The segment covering 31 to 46 (DSQSAAPGATKQAQQS) has biased composition (polar residues). Disordered stretches follow at residues 31-56 (DSQS…GMRA) and 392-415 (EAQS…GARS). A compositionally biased stretch (basic and acidic residues) spans 399–415 (PEEKATSREYAKKGARS).

This sequence belongs to the membrane fusion protein (MFP) (TC 8.A.1) family. As to quaternary structure, part of a tripartite efflux system composed of MdtA, MdtB and MdtC.

The protein resides in the cell inner membrane. The MdtABC tripartite complex confers resistance against novobiocin and deoxycholate. The chain is Multidrug resistance protein MdtA from Escherichia coli O6:K15:H31 (strain 536 / UPEC).